The chain runs to 507 residues: Dolichyl pyrophosphate Man9GlcNAc2 alpha-1,3-glucosyltransferase (507 aa).

At M1 to K3 the chain is on the cytoplasmic side. A helical membrane pass occupies residues W4–N24. At S25–T114 the chain is on the lumenal side. N-linked (GlcNAc...) asparagine glycosylation is present at N59. The helical transmembrane segment at T115–L135 threads the bilayer. The Cytoplasmic segment spans residues K136–K143. The helical transmembrane segment at I144–F164 threads the bilayer. At Q165 to G172 the chain is on the lumenal side. Residues F173–F193 traverse the membrane as a helical segment. At C194–K226 the chain is on the cytoplasmic side. Residues G227–L247 form a helical membrane-spanning segment. The Lumenal portion of the chain corresponds to P248–Q297. A helical membrane pass occupies residues L298 to L318. Residues Q319–K323 lie on the Cytoplasmic side of the membrane. Residues G324–H344 traverse the membrane as a helical segment. Over E345 to E361 the chain is Lumenal. The helical transmembrane segment at I362–L382 threads the bilayer. Over K383–L387 the chain is Cytoplasmic. The helical transmembrane segment at M388–F408 threads the bilayer. Over E409–R437 the chain is Lumenal. The helical transmembrane segment at I438–V458 threads the bilayer. Topologically, residues T459–L473 are cytoplasmic. Residues V474–V494 form a helical membrane-spanning segment. Over W495–S507 the chain is Lumenal.

The protein belongs to the ALG6/ALG8 glucosyltransferase family.

Its subcellular location is the endoplasmic reticulum membrane. The enzyme catalyses an alpha-D-Man-(1-&gt;2)-alpha-D-Man-(1-&gt;2)-alpha-D-Man-(1-&gt;3)-[alpha-D-Man-(1-&gt;2)-alpha-D-Man-(1-&gt;3)-[alpha-D-Man-(1-&gt;2)-alpha-D-Man-(1-&gt;6)]-alpha-D-Man-(1-&gt;6)]-beta-D-Man-(1-&gt;4)-beta-D-GlcNAc-(1-&gt;4)-alpha-D-GlcNAc-diphospho-di-trans,poly-cis-dolichol + a di-trans,poly-cis-dolichyl beta-D-glucosyl phosphate = an alpha-D-Glc-(1-&gt;3)-alpha-D-Man-(1-&gt;2)-alpha-D-Man-(1-&gt;2)-alpha-D-Man-(1-&gt;3)-[alpha-D-Man-(1-&gt;2)-alpha-D-Man-(1-&gt;3)-[alpha-D-Man-(1-&gt;2)-alpha-D-Man-(1-&gt;6)]-alpha-D-Man-(1-&gt;6)]-beta-D-Man-(1-&gt;4)-beta-D-GlcNAc-(1-&gt;4)-alpha-D-GlcNAc-diphospho-di-trans,poly-cis-dolichol + a di-trans,poly-cis-dolichyl phosphate + H(+). The protein operates within protein modification; protein glycosylation. Functionally, dolichyl pyrophosphate Man9GlcNAc2 alpha-1,3-glucosyltransferase that operates in the biosynthetic pathway of dolichol-linked oligosaccharides, the glycan precursors employed in protein asparagine (N)-glycosylation. The assembly of dolichol-linked oligosaccharides begins on the cytosolic side of the endoplasmic reticulum membrane and finishes in its lumen. The sequential addition of sugars to dolichol pyrophosphate produces dolichol-linked oligosaccharides containing fourteen sugars, including two GlcNAcs, nine mannoses and three glucoses. Once assembled, the oligosaccharide is transferred from the lipid to nascent proteins by oligosaccharyltransferases. In the lumen of the endoplasmic reticulum, adds the first glucose residue from dolichyl phosphate glucose (Dol-P-Glc) onto the lipid-linked oligosaccharide intermediate Man(9)GlcNAc(2)-PP-Dol to produce Glc(1)Man(9)GlcNAc(2)-PP-Dol. Glc(1)Man(9)GlcNAc(2)-PP-Dol is a substrate for ALG8, the following enzyme in the biosynthetic pathway. This is Dolichyl pyrophosphate Man9GlcNAc2 alpha-1,3-glucosyltransferase from Pongo abelii (Sumatran orangutan).